The sequence spans 365 residues: Protein BZR1 homolog 2 (365 aa).

The span at 1 to 30 (MATGGGGGGGGMGGGGVGGGAGAAGVGVGG) shows a compositional bias: gly residues. Disordered stretches follow at residues 1-45 (MATG…KRRE), 113-154 (SPSP…NMAN), 191-236 (SAPV…TPPS), and 344-365 (HEDS…RAAA). Residues 31–113 (RMPTWREREN…RMEVIGCSVS (83 aa)) are required for DNA-binding. Over residues 113 to 144 (SPSPCSSYQPSPRASYNASPTSSSFPSGASSP) the composition is skewed to low complexity. 2 stretches are compositionally biased toward polar residues: residues 215-233 (SNVQ…VNST) and 356-365 (LGSSRTRAAA).

This sequence belongs to the BZR/LAT61 family. As to quaternary structure, interacts with PUB24.

Functionally, may function in brassinosteroid signaling. The protein is Protein BZR1 homolog 2 of Oryza sativa subsp. japonica (Rice).